The following is an 867-amino-acid chain: Cation/H(+) antiporter 23, chloroplastic (867 aa).

A run of 12 helical transmembrane segments spans residues 43–63 (SGST…VANL), 75–95 (LYLP…PSVL), 112–132 (MVLE…LGLG), 146–166 (VIIA…LYYL), 175–195 (IISG…PDLA), 212–232 (AMCA…FGFA), 242–262 (KMMP…IFVI), 283–303 (HVWF…ACGV), 336–356 (GILM…GFML), 362–382 (FMMV…TVIT), 393–413 (AFAI…VLNA), and 427–447 (HMTI…AFAY). Residues 848-867 (SMYEDEDEDDEEDHQYGIHR) are disordered. Acidic residues predominate over residues 851-860 (EDEDEDDEED).

The protein belongs to the monovalent cation:proton antiporter 2 (CPA2) transporter (TC 2.A.37) family. CHX (TC 2.A.37.4) subfamily. As to expression, specifically expressed in flower buds and pollen. Expressed in leaves, roots and stems.

It localises to the plastid. The protein resides in the chloroplast membrane. It is found in the endoplasmic reticulum membrane. Functionally, operates as a K(+)/H(+) antiporter or Na(+)/H(+) antiporter of the chloroplast envelope that functions in pH homeostasis and chloroplast development. Monovalent cation transporter with a preference for Cs(+), K(+) and Rb(+) relative to Na(+) or Li(+). Required for pollen tube guidance, but not for normal pollen development. May also be involved in the development or function of the female gametophyte. This chain is Cation/H(+) antiporter 23, chloroplastic (CHX23), found in Arabidopsis thaliana (Mouse-ear cress).